The sequence spans 494 residues: Rho GTPase-activating protein 19 (494 aa).

Residue Ala2 is modified to N-acetylalanine. Ser7 and Ser31 each carry phosphoserine. One can recognise a Rho-GAP domain in the interval 102–308 (MSLKRKEKGV…FMIKHSQKLF (207 aa)). 2 disordered regions span residues 349–368 (KSQK…TQHH) and 399–421 (QSLT…ARSR). Over residues 354-368 (NRVDSCPHQEETQHH) the composition is skewed to basic and acidic residues. Positions 399 to 415 (QSLTQTPGREPSTSQVQ) are enriched in polar residues. Phosphoserine is present on residues Ser422, Ser438, and Ser470. Thr478 carries the post-translational modification Phosphothreonine.

As to expression, strong expression in fetal heart, brain, placenta, lung, liver, skeletal muscle, kidney and pancreas. Weak expression in adult pancreas, spleen, thymus, and ovary.

It is found in the nucleus. Its function is as follows. GTPase activator for the Rho-type GTPases by converting them to an inactive GDP-bound state. The protein is Rho GTPase-activating protein 19 (ARHGAP19) of Homo sapiens (Human).